A 66-amino-acid chain; its full sequence is Large ribosomal subunit protein bL35 (66 aa).

This sequence belongs to the bacterial ribosomal protein bL35 family.

The sequence is that of Large ribosomal subunit protein bL35 from Parvibaculum lavamentivorans (strain DS-1 / DSM 13023 / NCIMB 13966).